Consider the following 732-residue polypeptide: MAP7 domain-containing protein 2 (732 aa).

Met-1 carries the N-acetylmethionine modification. Residues 1 to 10 (MERGGGGSGT) show a composition bias toward gly residues. 5 disordered regions span residues 1-64 (MERG…RREE), 95-123 (WRKL…LREE), 157-186 (PGGH…KRLS), 210-244 (GPLN…GKEA), and 279-509 (EFSG…KQKE). A compositionally biased stretch (basic and acidic residues) spans 49–64 (LKSDERQRLAKERREE). The stretch at 51 to 146 (SDERQRLAKE…RTQQLELKKK (96 aa)) forms a coiled coil. Basic and acidic residues predominate over residues 329-345 (MPKRKAEKEKSNKEREG). The span at 347–357 (LAQQAAGPQGE) shows a compositional bias: low complexity. The segment covering 359–374 (ALEKHVVDKHASEKHA) has biased composition (basic and acidic residues). Residues 375 to 386 (AAAGGKAENSAA) are compositionally biased toward low complexity. Over residues 404-509 (LAEKRRQARL…EKAMIEKQKE (106 aa)) the composition is skewed to basic and acidic residues.

Belongs to the MAP7 family. In terms of assembly, interacts (via N-terminus) with microtubules; facilitates microtubule stabilization. Interacts with kinesin-1 family members, KIF5A, KIF5B and KIF5C.

Its subcellular location is the cytoplasm. The protein localises to the cytoskeleton. It is found in the microtubule organizing center. It localises to the centrosome. The protein resides in the midbody. Its subcellular location is the cell projection. The protein localises to the neuron projection. It is found in the axon. In terms of biological role, microtubule-stabilizing protein that plays a role in the control of cell motility and neurite outgrowth via direct binding to the microtubule. Acts as a critical cofactor for kinesin transport. In the proximal axon, regulates kinesin-1 family members, KIF5A, KIF5B and KIF5C recruitment to microtubules and contributes to kinesin-1-mediated transport in the axons. The sequence is that of MAP7 domain-containing protein 2 (MAP7D2) from Homo sapiens (Human).